Consider the following 393-residue polypeptide: Acetyl-CoA acetyltransferase (393 aa).

The active-site Acyl-thioester intermediate is the C88. Active-site proton acceptor residues include H349 and C379.

The protein belongs to the thiolase-like superfamily. Thiolase family.

It is found in the cytoplasm. The enzyme catalyses 2 acetyl-CoA = acetoacetyl-CoA + CoA. It functions in the pathway metabolic intermediate biosynthesis; (R)-mevalonate biosynthesis; (R)-mevalonate from acetyl-CoA: step 1/3. This Pseudomonas aeruginosa (strain ATCC 15692 / DSM 22644 / CIP 104116 / JCM 14847 / LMG 12228 / 1C / PRS 101 / PAO1) protein is Acetyl-CoA acetyltransferase (atoB).